A 65-amino-acid chain; its full sequence is Protein C' (65 aa).

This sequence belongs to the rhabdoviruses C protein family.

In terms of biological role, seems to stimulates transcription by the viral polymerase. May play a role in viral pathogenesis or transmission by insects vectors. The chain is Protein C' (P) from Vesicular stomatitis New Jersey virus (strain Missouri subtype Hazelhurst) (VSNJV).